Here is a 769-residue protein sequence, read N- to C-terminus: Calcium up-regulated protein F (769 aa).

The segment at 1-21 is disordered; it reads MINIKDISKSSNQSEEKSLKG. Ricin B-type lectin domains are found at residues 25–145 and 116–249; these read KTKY…WTTF and QGNG…WGIN.

This sequence belongs to the cup family.

The protein resides in the cytoplasm. The protein localises to the membrane. May play an important role in stabilizing and/or regulating the cell membrane during Ca(2+) stress or certain stages of development. The sequence is that of Calcium up-regulated protein F (cupF) from Dictyostelium discoideum (Social amoeba).